A 674-amino-acid chain; its full sequence is Protein phosphatase 1 regulatory subunit 15A (674 aa).

At 1-21 (MAPGQAPHQATPWRDAHPFFL) the chain is on the cytoplasmic side. Positions 1-60 (MAPGQAPHQATPWRDAHPFFLLSPVMGLLSRAWSRLRGLGPLEPWLVEAVKGAALVEAGL) are required for localization in the endoplasmic reticulum. An intramembrane region (helical) is located at residues 22 to 39 (LSPVMGLLSRAWSRLRGL). At 40-674 (GPLEPWLVEA…AALDLSGRRG (635 aa)) the chain is on the cytoplasmic side. The segment at 65-504 (RTPLAIPHTP…AAEDWGEAEP (440 aa)) is disordered. S143 is modified (phosphoserine). Residues 162-172 (KAEEEGVAEEE) show a composition bias toward acidic residues. Positions 206 to 221 (TSTSALSPGSKPSTWV) are enriched in polar residues. The segment covering 232–241 (TEDKRTERSK) has biased composition (basic and acidic residues). Residues 246–256 (TSVSPRSSGSD) are compositionally biased toward polar residues. Residues 258–281 (RSWEYRSGEASEEKEEKAHKETGK) are compositionally biased toward basic and acidic residues. Position 262 is a phosphotyrosine (Y262). The segment covering 282–298 (GEAAPGPQSSAPAQRPQ) has biased composition (low complexity). A run of 4 repeats spans residues 337–369 (AFLK…SDEE), 384–417 (VFLK…REAE), 427–460 (AFLK…SEAA), and 477–510 (AHFR…FRVA). Residues 337–510 (AFLKAWVYWP…EAEPCPFRVA (174 aa)) form a 4 X 34 AA approximate repeats region. The interaction with SMAD7 stretch occupies residues 337–510 (AFLKAWVYWP…EAEPCPFRVA (174 aa)). Positions 348 to 373 (EDTEEEEDEEEDEDSDSGSDEEEGEA) are enriched in acidic residues. A Phosphotyrosine modification is found at Y391. A compositionally biased stretch (acidic residues) spans 395–415 (EDTEEEEDEDSDTGSAEDERE). Positions 418–427 (TSASTPPASA) are enriched in low complexity. Y434 carries the post-translational modification Phosphotyrosine. Over residues 439 to 458 (DTEEEEDEDVDSEDKEDDSE) the composition is skewed to acidic residues. Residues 466–477 (SDPHPSHPDQRA) show a composition bias toward basic and acidic residues. Residues 483–555 (GYRPGKETEE…DPETPLKARK (73 aa)) are interaction with KMT2A/MLL1. Residues 490 to 501 (TEEEEAAEDWGE) show a composition bias toward acidic residues. The residue at position 512 (Y512) is a Phosphotyrosine. 2 disordered regions span residues 534–554 (RLKR…LKAR) and 625–674 (APIP…GRRG). An interaction with SMARCB1 region spans residues 536-583 (KRPETPTHDPDPETPLKARKVRFSEKVTVHFLAVWAGPAQAARQGPWE). Residues 537 to 554 (RPETPTHDPDPETPLKAR) are compositionally biased toward basic and acidic residues. Residues 630–666 (LTQTLPSSSVPSSPVQTTPLSQAVATPSRSSAAAAAA) are compositionally biased toward low complexity.

This sequence belongs to the PPP1R15 family. Interacts with PPP1CA. Interacts with EIF2S1. Interacts with PCNA. Interacts with LYN and KMT2A/MLL1. Interacts with PPP1R1A and SMARCB1. Interacts with SMAD7. Interacts with BAG1. Interacts with NOX4. In terms of assembly, (Microbial infection) Interacts with enterovirus 71/EV71 non-structural protein precursor 3CD; this interaction promotes EV71 replication. Post-translationally, phosphorylated at multiple Ser/Thr residues. Phosphorylated on tyrosine by LYN; which impairs its antiproliferative activity. Phosphorylation at Tyr-262 enhances proteasomal degradation, this position is dephosphorylated by PTPN2. Polyubiquitinated. Exhibits a rapid proteasomal degradation with a half-life under 1 hour, ubiquitination depends on endoplasmic reticulum association.

Its subcellular location is the endoplasmic reticulum membrane. It is found in the mitochondrion outer membrane. Its function is as follows. Recruits the serine/threonine-protein phosphatase PPP1CA to prevents excessive phosphorylation of the translation initiation factor eIF-2A/EIF2S1, thereby reversing the shut-off of protein synthesis initiated by stress-inducible kinases and facilitating recovery of cells from stress. Down-regulates the TGF-beta signaling pathway by promoting dephosphorylation of TGFB1 by PP1. May promote apoptosis by inducing p53/TP53 phosphorylation on 'Ser-15'. Plays an essential role in autophagy by tuning translation during starvation, thus enabling lysosomal biogenesis and a sustained autophagic flux. Also acts a viral restriction factor by attenuating HIV-1 replication. Mechanistically, mediates the inhibition of HIV-1 TAR RNA-mediated translation. (Microbial infection) Promotes enterovirus 71 replication by mediating the internal ribosome entry site (IRES) activity of viral 5'-UTR. The protein is Protein phosphatase 1 regulatory subunit 15A (PPP1R15A) of Homo sapiens (Human).